The following is a 196-amino-acid chain: GTP cyclohydrolase 1 (196 aa).

Residues Cys86, His89, and Cys158 each contribute to the Zn(2+) site.

The protein belongs to the GTP cyclohydrolase I family. As to quaternary structure, homomer.

It catalyses the reaction GTP + H2O = 7,8-dihydroneopterin 3'-triphosphate + formate + H(+). Its pathway is cofactor biosynthesis; 7,8-dihydroneopterin triphosphate biosynthesis; 7,8-dihydroneopterin triphosphate from GTP: step 1/1. This chain is GTP cyclohydrolase 1, found in Clostridium botulinum (strain Kyoto / Type A2).